Consider the following 341-residue polypeptide: Beta-ketoacyl-[acyl-carrier-protein] synthase III 1 (341 aa).

Catalysis depends on residues Cys113 and His249. The segment at 250 to 254 is ACP-binding; that stretch reads QANIR. Residue Asn279 is part of the active site.

Belongs to the thiolase-like superfamily. FabH family. In terms of assembly, homodimer.

The protein resides in the cytoplasm. It carries out the reaction malonyl-[ACP] + acetyl-CoA + H(+) = 3-oxobutanoyl-[ACP] + CO2 + CoA. It participates in lipid metabolism; fatty acid biosynthesis. Its function is as follows. Catalyzes the condensation reaction of fatty acid synthesis by the addition to an acyl acceptor of two carbons from malonyl-ACP. Catalyzes the first condensation reaction which initiates fatty acid synthesis and may therefore play a role in governing the total rate of fatty acid production. Possesses both acetoacetyl-ACP synthase and acetyl transacylase activities. Its substrate specificity determines the biosynthesis of branched-chain and/or straight-chain of fatty acids. The sequence is that of Beta-ketoacyl-[acyl-carrier-protein] synthase III 1 from Deinococcus radiodurans (strain ATCC 13939 / DSM 20539 / JCM 16871 / CCUG 27074 / LMG 4051 / NBRC 15346 / NCIMB 9279 / VKM B-1422 / R1).